Here is a 658-residue protein sequence, read N- to C-terminus: Carnitine O-palmitoyltransferase 2, mitochondrial (658 aa).

The N-terminal 25 residues, 1–25 (MVARLLLRSWSRGLAVGPGAPCRPL), are a transit peptide targeting the mitochondrion. Residues 26–178 (STGFEPSQYL…DLLEPEVFHL (153 aa)) lie on the Mitochondrial matrix side of the membrane. At lysine 69 the chain carries N6-succinyllysine. Residue lysine 79 is modified to N6-acetyllysine. At lysine 85 the chain carries N6-succinyllysine. Positions 179–208 (NPAKSDTDTFKRFIRFVPSFLSWYGAYLVN) form an intramembrane region, note=Mitochondrial inner membrane. Over 209 to 658 (AYPLDMSQYY…DALEGKMIKT (450 aa)) the chain is Mitochondrial matrix. Lysine 239 carries the N6-acetyllysine; alternate modification. Position 239 is an N6-succinyllysine; alternate (lysine 239). Histidine 372 functions as the Proton acceptor in the catalytic mechanism. Lysine 418 is modified (N6-acetyllysine; alternate). At lysine 418 the chain carries N6-succinyllysine; alternate. An N6-succinyllysine mark is found at lysine 424 and lysine 439. Position 452 to 464 (452 to 464 (GREFLKKQKLSPD)) interacts with CoA. (R)-carnitine is bound by residues tyrosine 486, serine 488, and threonine 499. Lysine 510 carries the post-translational modification N6-acetyllysine; alternate. An N6-succinyllysine; alternate modification is found at lysine 510.

This sequence belongs to the carnitine/choline acetyltransferase family.

It is found in the mitochondrion inner membrane. The enzyme catalyses (R)-carnitine + hexadecanoyl-CoA = O-hexadecanoyl-(R)-carnitine + CoA. The catalysed reaction is octanoyl-CoA + (R)-carnitine = O-octanoyl-(R)-carnitine + CoA. It catalyses the reaction decanoyl-CoA + (R)-carnitine = O-decanoyl-(R)-carnitine + CoA. It carries out the reaction dodecanoyl-CoA + (R)-carnitine = O-dodecanoyl-R-carnitine + CoA. The enzyme catalyses tetradecanoyl-CoA + (R)-carnitine = O-tetradecanoyl-(R)-carnitine + CoA. The catalysed reaction is (R)-carnitine + octadecanoyl-CoA = O-octadecanoyl-(R)-carnitine + CoA. It catalyses the reaction eicosanoyl-CoA + (R)-carnitine = O-eicosanoyl-(R)-carnitine + CoA. It carries out the reaction (9Z)-tetradecenoyl-CoA + (R)-carnitine = O-(9Z)-tetradecenoyl-(R)-carnitine + CoA. The enzyme catalyses (5Z)-tetradecenoyl-CoA + (R)-carnitine = O-(5Z)-tetradecenoyl-(R)-carnitine + CoA. The catalysed reaction is (R)-carnitine + (9Z)-octadecenoyl-CoA = O-(9Z)-octadecenoyl-(R)-carnitine + CoA. It catalyses the reaction 4,8-dimethylnonanoyl-CoA + (R)-carnitine = O-4,8-dimethylnonanoyl-(R)-carnitine + CoA. It functions in the pathway lipid metabolism; fatty acid beta-oxidation. Involved in the intramitochondrial synthesis of acylcarnitines from accumulated acyl-CoA metabolites. Reconverts acylcarnitines back into the respective acyl-CoA esters that can then undergo beta-oxidation, an essential step for the mitochondrial uptake of long-chain fatty acids and their subsequent beta-oxidation in the mitochondrion. Active with medium (C8-C12) and long-chain (C14-C18) acyl-CoA esters. This chain is Carnitine O-palmitoyltransferase 2, mitochondrial (CPT2), found in Bos taurus (Bovine).